A 71-amino-acid chain; its full sequence is Brevinin-1CG4 (71 aa).

The N-terminal stretch at 1–22 is a signal peptide; that stretch reads MFTLKKSLLLLFFLGTINLSLC. The propeptide at 23–45 is removed in mature form; sequence EQERNADEEERRDDSDKRDVEVE. A disulfide bond links C65 and C71.

This sequence belongs to the frog skin active peptide (FSAP) family. Brevinin subfamily. In terms of tissue distribution, expressed by the skin glands.

The protein localises to the secreted. Functionally, antimicrobial peptide active against a variety of Gram-positive and some Gram-negative bacterial strains. Has antifungal activity against C.albicans ATCC 10231 and a slime mold isolate. Has hemolytic activity against human erythrocytes. This chain is Brevinin-1CG4, found in Amolops chunganensis (Chungan torrent frog).